Reading from the N-terminus, the 154-residue chain is 17 kDa surface antigen (154 aa).

A signal peptide spans 1 to 19 (MKLLSKIMIIALAASTLQA). Residue C20 is the site of N-palmitoyl cysteine attachment. The S-diacylglycerol cysteine moiety is linked to residue C20.

This sequence belongs to the rickettsiale 17 kDa surface antigen family.

It is found in the cell outer membrane. The protein is 17 kDa surface antigen (omp) of Rickettsia amblyommatis (Rickettsia amblyommii).